The primary structure comprises 160 residues: M-phase phosphoprotein 6 (160 aa).

Glycyl lysine isopeptide (Lys-Gly) (interchain with G-Cter in SUMO2) cross-links involve residues lysine 37 and lysine 86. The residue at position 110 (serine 110) is a Phosphoserine. The Nuclear localization signal signature appears at 116–133 (RRYETLVGTIGKKFARKR). Residue lysine 127 forms a Glycyl lysine isopeptide (Lys-Gly) (interchain with G-Cter in SUMO2) linkage. Threonine 147 is modified (phosphothreonine). Residues lysine 150 and lysine 153 each participate in a glycyl lysine isopeptide (Lys-Gly) (interchain with G-Cter in SUMO2) cross-link.

This sequence belongs to the MPP6 family. Associates with the RNA exosome complex, mediated by EXOSC3. Interacts with ARHGAP18. Interacts with exosome cofactors EXOSC10 and MTREX. In terms of processing, phosphorylated in M (mitotic) phase.

Its subcellular location is the nucleus. The protein resides in the nucleolus. It localises to the cytoplasm. RNA-binding protein that associates with the RNA exosome complex. Involved in the 3'-processing of the 7S pre-RNA to the mature 5.8S rRNA and play a role in recruiting the RNA exosome complex to pre-rRNA; this function may include C1D. This Homo sapiens (Human) protein is M-phase phosphoprotein 6.